A 111-amino-acid polypeptide reads, in one-letter code: Tubulin beta chain (111 aa).

A disordered region spans residues 82-111 (SEYQQYQDATAEDEGEFDEEEAEGEGQEYA). Residues 91–111 (TAEDEGEFDEEEAEGEGQEYA) show a composition bias toward acidic residues.

This sequence belongs to the tubulin family. In terms of assembly, dimer of alpha and beta chains. A typical microtubule is a hollow water-filled tube with an outer diameter of 25 nm and an inner diameter of 15 nM. Alpha-beta heterodimers associate head-to-tail to form protofilaments running lengthwise along the microtubule wall with the beta-tubulin subunit facing the microtubule plus end conferring a structural polarity. Microtubules usually have 13 protofilaments but different protofilament numbers can be found in some organisms and specialized cells. Mg(2+) serves as cofactor.

The protein resides in the cytoplasm. It localises to the cytoskeleton. Functionally, tubulin is the major constituent of microtubules, a cylinder consisting of laterally associated linear protofilaments composed of alpha- and beta-tubulin heterodimers. Microtubules grow by the addition of GTP-tubulin dimers to the microtubule end, where a stabilizing cap forms. Below the cap, tubulin dimers are in GDP-bound state, owing to GTPase activity of alpha-tubulin. The sequence is that of Tubulin beta chain from Lymnaea stagnalis (Great pond snail).